A 596-amino-acid chain; its full sequence is Probable protein phosphatase 2C 26 (596 aa).

The tract at residues 122-154 (SGPLDPAVPFSGPLPAKPPKPASSSSRGFSRRF) is disordered. In terms of domain architecture, PPM-type phosphatase spans 177-584 (LRRDDGVQWA…DDVTVMVISL (408 aa)). The Mn(2+) site is built by Asp-212, Gly-213, Asp-512, and Asp-575.

Belongs to the PP2C family. Requires Mg(2+) as cofactor. The cofactor is Mn(2+).

It catalyses the reaction O-phospho-L-seryl-[protein] + H2O = L-seryl-[protein] + phosphate. The catalysed reaction is O-phospho-L-threonyl-[protein] + H2O = L-threonyl-[protein] + phosphate. This Oryza sativa subsp. japonica (Rice) protein is Probable protein phosphatase 2C 26.